We begin with the raw amino-acid sequence, 54 residues long: Ovomucoid (54 aa).

Positions 4–54 constitute a Kazal-like domain; it reads VDCSDYPKPVCSLEYMPLCGSDNKTYGNKCNFCNAVADSNGTLTLSHFGKC. Intrachain disulfides connect Cys-6–Cys-36, Cys-14–Cys-33, and Cys-22–Cys-54. A glycan (N-linked (GlcNAc...) asparagine) is linked at Asn-43.

It is found in the secreted. The polypeptide is Ovomucoid (Guira guira (Guira cuckoo)).